A 462-amino-acid chain; its full sequence is Kinetochore protein Nuf2-B (462 aa).

Residues 143–462 (SGYKSALENV…AELNRRLSRQ (320 aa)) adopt a coiled-coil conformation. Positions 236–259 (EQERMKSQIVESPEQRKSKTERMK) are disordered. The span at 248 to 259 (PEQRKSKTERMK) shows a compositional bias: basic and acidic residues.

This sequence belongs to the NUF2 family. Component of the NDC80 complex, which is composed of ndc80, cdca1, spbc24 and spbc25. The NDC80 complex interacts with mis12 and zwint.

It localises to the nucleus. Its subcellular location is the chromosome. It is found in the centromere. The protein resides in the kinetochore. Its function is as follows. Acts as a component of the essential kinetochore-associated NDC80 complex, which is required for chromosome segregation and spindle checkpoint activity. Required for kinetochore integrity and the organization of stable microtubule binding sites in the outer plate of the kinetochore. The NDC80 complex synergistically enhances the affinity of the SKA1 complex for microtubules and may allow the NDC80 complex to track depolymerizing microtubules. The polypeptide is Kinetochore protein Nuf2-B (nuf2-b) (Xenopus laevis (African clawed frog)).